A 357-amino-acid chain; its full sequence is Dual-specificity RNA methyltransferase RlmN (357 aa).

The active-site Proton acceptor is the E89. The Radical SAM core domain maps to E109 to D340. An intrachain disulfide couples C116 to C345. 3 residues coordinate [4Fe-4S] cluster: C123, C127, and C130. S-adenosyl-L-methionine is bound by residues G173–E174, S203, S226–H228, and N302. C345 functions as the S-methylcysteine intermediate in the catalytic mechanism.

This sequence belongs to the radical SAM superfamily. RlmN family. Requires [4Fe-4S] cluster as cofactor.

It localises to the cytoplasm. It carries out the reaction adenosine(2503) in 23S rRNA + 2 reduced [2Fe-2S]-[ferredoxin] + 2 S-adenosyl-L-methionine = 2-methyladenosine(2503) in 23S rRNA + 5'-deoxyadenosine + L-methionine + 2 oxidized [2Fe-2S]-[ferredoxin] + S-adenosyl-L-homocysteine. The catalysed reaction is adenosine(37) in tRNA + 2 reduced [2Fe-2S]-[ferredoxin] + 2 S-adenosyl-L-methionine = 2-methyladenosine(37) in tRNA + 5'-deoxyadenosine + L-methionine + 2 oxidized [2Fe-2S]-[ferredoxin] + S-adenosyl-L-homocysteine. Specifically methylates position 2 of adenine 2503 in 23S rRNA and position 2 of adenine 37 in tRNAs. m2A2503 modification seems to play a crucial role in the proofreading step occurring at the peptidyl transferase center and thus would serve to optimize ribosomal fidelity. The polypeptide is Dual-specificity RNA methyltransferase RlmN (Helicobacter pylori (strain ATCC 700392 / 26695) (Campylobacter pylori)).